We begin with the raw amino-acid sequence, 28 residues long: Cysteine-rich venom protein asurin-2 (28 aa).

Positions 1 to 15 (SNKKDYRKEIVDKHN) are enriched in basic and acidic residues. Residues 1–28 (SNKKDYRKEIVDKHNALSRSVKPTASNM) form a disordered region. The span at 17 to 28 (LSRSVKPTASNM) shows a compositional bias: polar residues.

Belongs to the CRISP family. In terms of processing, contains 8 disulfide bonds. In terms of tissue distribution, expressed by the venom gland.

It localises to the secreted. In terms of biological role, blocks contraction of smooth muscle elicited by high potassium-induced depolarization, but does not block caffeine-stimulated contraction. May target voltage-gated calcium channels on smooth muscle. This Austrelaps superbus (Lowland copperhead snake) protein is Cysteine-rich venom protein asurin-2.